The sequence spans 186 residues: Ribosome-recycling factor (186 aa).

Positions 135-164 (DGMDDLKKAEKDGEIGQDESRAQSERVQKM) are disordered.

It belongs to the RRF family.

Its subcellular location is the cytoplasm. Its function is as follows. Responsible for the release of ribosomes from messenger RNA at the termination of protein biosynthesis. May increase the efficiency of translation by recycling ribosomes from one round of translation to another. In Sinorhizobium medicae (strain WSM419) (Ensifer medicae), this protein is Ribosome-recycling factor.